The chain runs to 2332 residues: Genome polyprotein (2332 aa).

The Peptidase C28 domain maps to 1–201 (MHTTDCFIAL…WKAMVQRKLK (201 aa)). Residues 1 to 1480 (MHTTDCFIAL…SFVKRAFKRL (1480 aa)) lie on the Cytoplasmic side of the membrane. Active-site for leader protease activity residues include cysteine 51, histidine 148, and aspartate 163. Disordered stretches follow at residues 199–218 (KLKG…QSGN) and 238–265 (QLGD…NTQN). Glycine 202 is lipidated: N-myristoyl glycine; by host. Composition is skewed to polar residues over residues 204–218 (GQSS…QSGN) and 238–251 (QLGD…SNEG). Residues 252 to 265 (STDTTSTHTTNTQN) are compositionally biased toward low complexity. The tract at residues 789 to 797 (ALLRAATYY) is antigenic epitope. A Cell attachment site motif is present at residues 868–870 (RGD). An SF3 helicase domain is found at 1189-1353 (NVHIANLCKV…DGYKINNKLD (165 aa)). 1217–1224 (GKSGQGKS) lines the ATP pocket. Residues 1481-1501 (KENFEIVALCLTLLANIVIMI) lie within the membrane without spanning it. The Cytoplasmic segment spans residues 1502–2332 (RETRKRQKMV…RWVNAVCGDA (831 aa)). 2 stretches are compositionally biased toward basic and acidic residues: residues 1529–1538 (KTLDEAEKNP) and 1549–1563 (FRER…RDDV). The segment at 1529–1584 (KTLDEAEKNPLETSGASTVGFRERTLPGQKARDDVNSEPAQPAEEQPQAEGPYAGP) is disordered. The segment covering 1566 to 1578 (EPAQPAEEQPQAE) has biased composition (low complexity). Residues tyrosine 1581, tyrosine 1604, and tyrosine 1628 each carry the O-(5'-phospho-RNA)-tyrosine modification. One can recognise a Peptidase C3 domain in the interval 1652–1848 (APPTDLQKMV…YCSCVSRSML (197 aa)). Histidine 1695 acts as the For protease 3C activity; Proton donor/acceptor in catalysis. Catalysis depends on for protease 3C activity residues aspartate 1733 and cysteine 1812. The Nuclear localization signal signature appears at 1878-1886 (MRKTKLAPT). The 119-residue stretch at 2096–2214 (RNVWDVDYSA…ASDYDLDFEA (119 aa)) folds into the RdRp catalytic domain. Catalysis depends on aspartate 2200, which acts as the For RdRp activity.

The protein belongs to the picornaviruses polyprotein family. In terms of assembly, interacts with host ISG15. Capsid protein VP1: Interacts (via R-G-D motif) with host ITGAV/ITGB6. As to quaternary structure, interacts (via R-G-D motif) with host ITGAV/ITGB6. Interacts with host MAVS; this interaction inhibits binding of host TRAF3 to MAVS, thereby suppressing interferon-mediated responses. Forms homooligomers. In terms of assembly, homohexamer. Interacts with host VIM. Interacts with host BECN1. As to quaternary structure, interacts with host DCTN3. Interacts with RNA-dependent RNA polymerase; this interaction allows 3B-1 to binds 2 polymerases and act as a primer. It also allows the recruitment of the RNA-dependent RNA polymerase to host membranes. In terms of assembly, interacts with RNA-dependent RNA polymerase; this interaction allows 3B-2 to act as a primer. As to quaternary structure, interacts with RNA-dependent RNA polymerase; this interaction allows 3B-3 to act as a primer. Interacts with 3B-1; this interaction allows 3B-1 to binds 2 polymerases and act as a primer. It also allows the recruitment of the RNA-dependent RNA polymerase to host membranes. Interacts with 3B-2; this interaction allows 3B-2 to act as a primer. Interacts with 3B-3; this interaction allows 3B-3 to act as a primer. In terms of processing, removes six residues from its own C-terminus, generating sLb(pro). Post-translationally, specific enzymatic cleavages in vivo by the viral proteases yield a variety of precursors and mature proteins. The polyprotein seems to be cotranslationally cleaved at the 2A/2B junction by a ribosomal skip from one codon to the next without formation of a peptide bond. This process would release the L-P1-2A peptide from the translational complex. During virion maturation, immature virions are rendered infectious following cleavage of VP0 into VP4 and VP2. This maturation seems to be an autocatalytic event triggered by the presence of RNA in the capsid and is followed by a conformational change of the particle. In terms of processing, myristoylation is required during RNA encapsidation and formation of the mature virus particle. Post-translationally, uridylylated by the polymerase and covalently linked to the 5'-end of genomic RNA. These uridylylated forms act as a nucleotide-peptide primer for the polymerase.

It localises to the host nucleus. The protein resides in the host cytoplasm. Its subcellular location is the virion. The protein localises to the host endoplasmic reticulum membrane. It is found in the host cytoplasmic vesicle membrane. It catalyses the reaction Autocatalytically cleaves itself from the polyprotein of the foot-and-mouth disease virus by hydrolysis of a Lys-|-Gly bond, but then cleaves host cell initiation factor eIF-4G at bonds -Gly-|-Arg- and -Lys-|-Arg-.. It carries out the reaction a ribonucleoside 5'-triphosphate + H2O = a ribonucleoside 5'-diphosphate + phosphate + H(+). The catalysed reaction is RNA(n) + a ribonucleoside 5'-triphosphate = RNA(n+1) + diphosphate. The enzyme catalyses Selective cleavage of Gln-|-Gly bond in the poliovirus polyprotein. In other picornavirus reactions Glu may be substituted for Gln, and Ser or Thr for Gly.. Functionally, autocatalytically cleaves itself from the polyprotein at the L/VP0 junction. Also cleaves the host translation initiation factors EIF4G1 and EIF4G3, in order to shut off the capped cellular mRNA transcription. Plays a role in counteracting host innate antiviral response using diverse mechanisms. Possesses a deubiquitinase activity acting on both 'Lys-48' and 'Lys-63'-linked polyubiquitin chains. In turn, inhibits the ubiquitination and subsequent activation of key signaling molecules of type I IFN response such as host RIGI, TBK1, TRAF3 and TRAF6. Inhibits host NF-kappa-B activity by inducing a decrease in RELA mRNA levels. Cleaves a peptide bond in the C-terminus of host ISG15, resulting in the damaging of this modifier that can no longer be attached to target proteins. Also cleaves host G3BP1 and G3BP2 in order to inhibit cytoplasmic stress granules assembly. Lies on the inner surface of the capsid shell. After binding to the host receptor, the capsid undergoes conformational changes. Capsid protein VP4 is released, capsid protein VP1 N-terminus is externalized, and together, they shape a pore in the host membrane through which the viral genome is translocated into the host cell cytoplasm. After genome has been released, the channel shrinks. Its function is as follows. Forms an icosahedral capsid of pseudo T=3 symmetry with capsid proteins VP1 and VP3. The capsid is composed of 60 copies of each capsid protein organized in the form of twelve pentamers and encloses the viral positive strand RNA genome. Upon acidifcation in the endosome, dissociates into pentamers. In terms of biological role, forms an icosahedral capsid of pseudo T=3 symmetry with capsid proteins VP0 and VP3. The capsid is composed of 60 copies of each capsid protein organized in the form of twelve pentamers and encloses the viral positive strand RNA genome. Upon acidifcation in the endosome, dissociates into pentamers. Functionally, forms an icosahedral capsid of pseudo T=3 symmetry with capsid proteins VP2 and VP3. The capsid is composed of 60 copies of each capsid protein organized in the form of twelve pentamers and encloses the viral positive strand RNA genome. Mediates cell entry by attachment to an integrin receptor, usually host ITGAV/ITGB6. In addition, targets host MAVS to suppress type I IFN pathway. Upon acidifcation in the endosome, dissociates into pentamers. Mediates self-processing of the polyprotein by a translational effect termed 'ribosome skipping'. Mechanistically, 2A-mediated cleavage occurs between the C-terminal glycine and the proline of the downstream protein 2B. In the case of foot-and-mouth disease virus, the 2A oligopeptide is post-translationally 'trimmed' from the C-terminus of the upstream protein 1D by 3C proteinase. Its function is as follows. Plays an essential role in the virus replication cycle by acting as a viroporin. Creates a pore in the host endoplasmic reticulum and as a consequence releases Ca2+ in the cytoplasm of infected cell. In turn, high levels of cytoplasmic calcium may trigger membrane trafficking and transport of viral ER-associated proteins to viroplasms, sites of viral genome replication. In terms of biological role, associates with and induces structural rearrangements of intracellular membranes. Triggers host autophagy by interacting with host BECN1 and thereby promotes viral replication. Participates in viral replication and interacts with host DHX9. Displays RNA-binding, nucleotide binding and NTPase activities. May play a role in virion morphogenesis and viral RNA encapsidation by interacting with the capsid protein VP3. Functionally, plays important roles in virus replication, virulence and host range. Cooperates with host DDX56 to inhibit IRF3 nuclear translocation and subsequent type I interferon production. Covalently linked to the 5'-end of both the positive-strand and negative-strand genomic RNAs. Acts as a genome-linked replication primer. Its function is as follows. Cysteine protease that generates mature viral proteins from the precursor polyprotein. In addition to its proteolytic activity, binds to viral RNA and thus influences viral genome replication. RNA and substrate bind cooperatively to the protease. In terms of biological role, RNA-directed RNA polymerase 3D-POL replicates genomic and antigenomic RNA by recognizing replications specific signals. Covalently attaches UMP to a tyrosine of VPg, which is used to prime RNA synthesis. The positive stranded RNA genome is first replicated at virus induced membranous vesicles, creating a dsRNA genomic replication form. This dsRNA is then used as template to synthesize positive stranded RNA genomes. ss(+)RNA genomes are either translated, replicated or encapsidated. The polypeptide is Genome polyprotein (Foot-and-mouth disease virus (isolate -/Germany/A5Westerwald/1951 serotype A) (FMDV)).